Here is a 197-residue protein sequence, read N- to C-terminus: MVRRITLNSNFMFGASDIKSLPNESAPEIAFAGRSNVGKSSLINLLINSKKAARVSSKPGCTRQINFYSMYNDKFRLVDLPGYGCSHASKDETIQYLGLVEYYLIHRRNLRRVFVLIDSKVRLKEIDKDFIYWLTYNNINFDVVLTKIDKVDRENLDAIIESTRKWINNESVSIRQISVRVKYEMTKVRDEFFKFTR.

The EngB-type G domain maps to 25–197 (SAPEIAFAGR…VRDEFFKFTR (173 aa)). GTP contacts are provided by residues 33-40 (GRSNVGKS), 60-64 (GCTRQ), 79-82 (DLPG), 146-149 (TKID), and 177-179 (ISV). Mg(2+) contacts are provided by Ser-40 and Thr-62.

This sequence belongs to the TRAFAC class TrmE-Era-EngA-EngB-Septin-like GTPase superfamily. EngB GTPase family. Requires Mg(2+) as cofactor.

In terms of biological role, necessary for normal cell division and for the maintenance of normal septation. In Wolbachia sp. subsp. Brugia malayi (strain TRS), this protein is Probable GTP-binding protein EngB.